The chain runs to 355 residues: Trans-enoyl reductase (355 aa).

Residue 45–48 participates in NADP(+) binding; the sequence is VDTK. 131–138 is a binding site for substrate; the sequence is ISFMTTGL. NADP(+) is bound by residues 166-169, 189-192, tyrosine 207, and 254-255; these read SSAT, SPRN, and LE. Position 275–279 (275–279) interacts with substrate; it reads GPQML. An NADP(+)-binding site is contributed by 344–345; the sequence is IS.

Belongs to the zinc-containing alcohol dehydrogenase family. As to quaternary structure, monomer.

It catalyses the reaction L-serine + 7 malonyl-CoA + acetyl-CoA + 2 S-adenosyl-L-methionine + ATP + 8 NADPH + 11 H(+) = (5S)-3-[(2E,6R,8E,10E,12E)-2,6-dimethyltetradeca-2,8,10,12-tetraenoyl]-5-(hydroxymethyl)pyrrolidine-2,4-dione + AMP + 2 S-adenosyl-L-homocysteine + 7 CO2 + diphosphate + 8 NADP(+) + 8 CoA + 6 H2O. It functions in the pathway mycotoxin biosynthesis. Hybrid PKS-NRPS synthetase; part of the gene cluster that mediates the biosynthesis of trichosetin, a trans-fused decalin-containing tetramic acid with antimicrobial activity. The PKS module of PKS-NRPS1 together with the enoylreductase (ER) catalyze the formation of the polyketide unit which is then conjugated to L-serine by the condensation domain of the PKS-NRPS1 NRPS module. Activity of the Dieckmann cyclase domain (RED) results in release of the Dieckmann product intermediate. Diels-Alderase (DA) is involved in endo-selective Diels-Alder cycloaddition to form the decalin ring, leading to the production of N-desmethylequisetin also called trichosetin. The cluster does not contain the equisetin N-methyltransferase and consequently, trichosetin is isolated as final product. The chain is Trans-enoyl reductase from Gibberella fujikuroi (strain CBS 195.34 / IMI 58289 / NRRL A-6831) (Bakanae and foot rot disease fungus).